Reading from the N-terminus, the 179-residue chain is Ribosome maturation factor RimM (179 aa).

The PRC barrel domain occupies 100 to 176 (KEEFHLLELI…FVIINPPNGL (77 aa)).

The protein belongs to the RimM family. In terms of assembly, binds ribosomal protein uS19.

The protein localises to the cytoplasm. Its function is as follows. An accessory protein needed during the final step in the assembly of 30S ribosomal subunit, possibly for assembly of the head region. Essential for efficient processing of 16S rRNA. May be needed both before and after RbfA during the maturation of 16S rRNA. It has affinity for free ribosomal 30S subunits but not for 70S ribosomes. The chain is Ribosome maturation factor RimM from Prochlorococcus marinus (strain MIT 9301).